Here is a 345-residue protein sequence, read N- to C-terminus: Adenosine kinase 2 (345 aa).

Residue Asp-300 is part of the active site.

Belongs to the carbohydrate kinase PfkB family. In terms of assembly, interacts with the begomovirus AL2 protein and the curtovirus L2 protein. Interacts with KIN11. It depends on Mg(2+) as a cofactor. Phosphorylated by KIN11. As to expression, widely expressed.

It localises to the cytoplasm. The catalysed reaction is adenosine + ATP = AMP + ADP + H(+). It functions in the pathway purine metabolism; AMP biosynthesis via salvage pathway; AMP from adenosine: step 1/1. Inactivated by the begomovirus AL2 protein or the curtovirus L2 protein. ATP dependent phosphorylation of adenosine and other related nucleoside analogs to monophosphate derivatives. Essential to sustain methyl recycling. The protein is Adenosine kinase 2 of Arabidopsis thaliana (Mouse-ear cress).